The chain runs to 228 residues: MKAAVISFPGSNCDLDLQWAVRAIAGAECDLIKPTQTDLTAYDVVMVPGGFSYGDYLRSGAIARFSPVMAALKQFAAAGGYVIGICNGFQILTEAGLLPGALQWNRDLNFICEPVALTVENAGTAFSNQYQVGEHLTLPIAHGEGNYYADPETLAALETNGQVVFRYANNPNGSMHDIAGVTNETGNVLGMMPHPERAVEALLGGTDGLGVFQSLINQTEGADVRGAR.

Residues 2–225 (KAAVISFPGS…INQTEGADVR (224 aa)) form the Glutamine amidotransferase type-1 domain. Cysteine 86 functions as the Nucleophile in the catalytic mechanism. Active-site residues include histidine 194 and glutamate 196.

Part of the FGAM synthase complex composed of 1 PurL, 1 PurQ and 2 PurS subunits.

It localises to the cytoplasm. It catalyses the reaction N(2)-formyl-N(1)-(5-phospho-beta-D-ribosyl)glycinamide + L-glutamine + ATP + H2O = 2-formamido-N(1)-(5-O-phospho-beta-D-ribosyl)acetamidine + L-glutamate + ADP + phosphate + H(+). The enzyme catalyses L-glutamine + H2O = L-glutamate + NH4(+). Its pathway is purine metabolism; IMP biosynthesis via de novo pathway; 5-amino-1-(5-phospho-D-ribosyl)imidazole from N(2)-formyl-N(1)-(5-phospho-D-ribosyl)glycinamide: step 1/2. In terms of biological role, part of the phosphoribosylformylglycinamidine synthase complex involved in the purines biosynthetic pathway. Catalyzes the ATP-dependent conversion of formylglycinamide ribonucleotide (FGAR) and glutamine to yield formylglycinamidine ribonucleotide (FGAM) and glutamate. The FGAM synthase complex is composed of three subunits. PurQ produces an ammonia molecule by converting glutamine to glutamate. PurL transfers the ammonia molecule to FGAR to form FGAM in an ATP-dependent manner. PurS interacts with PurQ and PurL and is thought to assist in the transfer of the ammonia molecule from PurQ to PurL. The chain is Phosphoribosylformylglycinamidine synthase subunit PurQ from Lacticaseibacillus paracasei (strain ATCC 334 / BCRC 17002 / CCUG 31169 / CIP 107868 / KCTC 3260 / NRRL B-441) (Lactobacillus paracasei).